A 225-amino-acid polypeptide reads, in one-letter code: Membrane protein (225 aa).

Residues 1 to 20 (MPNETNCTLDFEQSVQLFKE) are Virion surface-facing. Residues 21 to 41 (YNLFITAFLLFLTIILQYGYA) traverse the membrane as a helical segment. Over 42 to 51 (TRSKVIYTLK) the chain is Intravirion. The helical transmembrane segment at 52–72 (MIVLWCFWPLNIAVGVISCTY) threads the bilayer. Topologically, residues 73–77 (PPNTG) are virion surface. The helical transmembrane segment at 78–98 (GLVAAIILTVFACLSFVGYWI) threads the bilayer. Topologically, residues 99-225 (QSIRLFKRCR…VATGGSSLYT (127 aa)) are intravirion.

It belongs to the gammacoronaviruses M protein family. In terms of assembly, homomultimer. Interacts with envelope E protein in the budding compartment of the host cell, which is located between endoplasmic reticulum and the Golgi complex. Forms a complex with HE and S proteins. Interacts with nucleocapsid N protein. This interaction probably participates in RNA packaging into the virus.

It localises to the virion membrane. Its subcellular location is the host Golgi apparatus membrane. Component of the viral envelope that plays a central role in virus morphogenesis and assembly via its interactions with other viral proteins. The protein is Membrane protein of Avian infectious bronchitis virus (strain Beaudette) (IBV).